The chain runs to 515 residues: Nectin-1 (515 aa).

A signal peptide spans 1–30 (MARMGLAGAAGRWWGLALGLTAFFLPGTHT). The Ig-like V-type domain occupies 31 to 141 (QVVQVNDSMY…GNRESQLNLT (111 aa)). The Extracellular portion of the chain corresponds to 31–354 (QVVQVNDSMY…GRRAGQMPTA (324 aa)). N-linked (GlcNAc...) asparagine glycosylation is found at asparagine 36, asparagine 72, asparagine 139, asparagine 202, asparagine 286, asparagine 297, and asparagine 332. Cysteines 51 and 124 form a disulfide. Ig-like C2-type domains follow at residues 145 to 243 (KPTN…TLNV) and 247 to 334 (PEVT…VNIT). Disulfide bonds link cysteine 172–cysteine 226 and cysteine 269–cysteine 316. The tract at residues 282 to 299 (WTTLNGSLPKGVEAQNRT) is interaction with FGFR. Residues 355 to 375 (IIGGVAGSVLLVLIVVGGIIV) traverse the membrane as a helical segment. Residues 376–515 (ALRRRRHTFK…SFISKKEWYV (140 aa)) lie on the Cytoplasmic side of the membrane. Residues 399–486 (YSKAGIPQHH…DGYGDRTLGY (88 aa)) form a disordered region. Phosphoserine is present on residues serine 421, serine 433, and serine 434. A Phosphotyrosine modification is found at tyrosine 435. The span at 447–464 (GERKVGGPHPKYDEDAKR) shows a compositional bias: basic and acidic residues. A Phosphoserine modification is found at serine 509.

The protein belongs to the nectin family. As to quaternary structure, cis- and trans-homodimer. Can form trans-heterodimers with NECTIN3 and with NECTIN4. Interaction between NECTIN1 and NECTIN3 on the pre- and postsynaptic sites, respectively, initiates the formation of puncta adherentia junctions between axons and dendrites. Interacts (via cytoplasmic domain) with AFDN (via PDZ domain); this interaction recruits NECTIN1 to cadherin-based adherens junctions and provides a connection with the actin cytoskeleton. Interacts with integrin alphaV/beta3. Interacts (via Ig-like C2-type domain 2) with FGFR1, FGFR2 and FGFR3. (Microbial infection) Interacts with herpes pseudorabies virus/PRV envelope glycoprotein D.

Its subcellular location is the cell membrane. It is found in the cell junction. It localises to the adherens junction. The protein localises to the presynaptic cell membrane. In terms of biological role, cell adhesion molecule that promotes cell-cell contacts and plays important roles in the development of the nervous system. Acts by forming homophilic or heterophilic trans-dimers. Heterophilic interactions have been detected between NECTIN1 and NECTIN3 and between NECTIN1 and NECTIN4. Involved in axon guidance by promoting contacts between the commissural axons and the floor plate cells. Involved in synaptogegesis. Has some neurite outgrowth-promoting activity. Promotes formation of checkerboard-like cellular pattern of hair cells and supporting cells in the auditory epithelium via heterophilic interaction with NECTIN3: NECTIN1 is present in the membrane of hair cells and associates with NECTIN3 on supporting cells, thereby mediating heterotypic adhesion between these two cell types. Required for enamel mineralization. (Microbial infection) Acts as a receptor for pseudorabies virus/PRV. This Mus musculus (Mouse) protein is Nectin-1.